Here is a 557-residue protein sequence, read N- to C-terminus: Polypyrimidine tract-binding protein 1 (557 aa).

At Met-1 the chain carries N-acetylmethionine. The residue at position 16 (Ser-16) is a Phosphoserine. RRM domains are found at residues 59 to 143 (RVIH…SSPN), 184 to 260 (LRII…FSKL), and 363 to 437 (SVLL…LSKH). Residue Lys-65 forms a Glycyl lysine isopeptide (Lys-Gly) (interchain with G-Cter in SUMO2) linkage. Phosphotyrosine is present on Tyr-127. Position 138 is a phosphothreonine (Thr-138). At Ser-141 the chain carries Phosphoserine. Residue Lys-218 forms a Glycyl lysine isopeptide (Lys-Gly) (interchain with G-Cter in SUMO2) linkage. The disordered stretch occupies residues 437-460 (HQSVQLPREGQEDQGLTKDYGNSP). Phosphoserine is present on Ser-459. The 76-residue stretch at 480–555 (ATLHLSNIPP…HHLRVSFSKS (76 aa)) folds into the RRM 4 domain.

Monomer. Part of a ternary complex containing KHSRP, PTBP1, PTBP2 and HNRPH1. Interacts with RAVER1 and SFPQ.

The protein localises to the nucleus. Plays a role in pre-mRNA splicing and in the regulation of alternative splicing events. Activates exon skipping of its own pre-mRNA during muscle cell differentiation. Binds to the polypyrimidine tract of introns. May promote RNA looping when bound to two separate polypyrimidine tracts in the same pre-mRNA. May promote the binding of U2 snRNP to pre-mRNA. Cooperates with RAVER1 to modulate switching between mutually exclusive exons during maturation of the TPM1 pre-mRNA. Represses the splicing of MAPT/Tau exon 10. Binds to polypyrimidine-rich controlling element (PCE) of CFTR and promotes exon skipping of CFTR exon 9, thereby antagonizing TIA1 and its role in exon inclusion of CFTR exon 9. Plays a role in the splicing of pyruvate kinase PKM by binding repressively to a polypyrimidine tract flanking PKM exon 9, inhibiting exon 9 inclusion and resulting in exon 10 inclusion and production of the PKM M2 isoform. In Bos taurus (Bovine), this protein is Polypyrimidine tract-binding protein 1 (PTBP1).